The chain runs to 604 residues: ATPase family AAA domain-containing protein 3A homolog (604 aa).

Positions 1–50 (MSWLLGRNRQQPQPDQTAGFSEGGGAADPEGRTAGEKSGDSQLSRAERKA) are disordered. Residues 8–19 (NRQQPQPDQTAG) are compositionally biased toward polar residues. The segment covering 29–50 (PEGRTAGEKSGDSQLSRAERKA) has biased composition (basic and acidic residues). The stretch at 62 to 221 (ERAADAAKTL…INLEKIRLKA (160 aa)) forms a coiled coil. ATP is bound at residue 358–365 (GPPGTGKT).

Can form homooligomers.

The protein localises to the mitochondrion inner membrane. Its subcellular location is the mitochondrion matrix. It is found in the mitochondrion nucleoid. Required to maintain the proper number of mitochondria in neurons and muscles. This Drosophila melanogaster (Fruit fly) protein is ATPase family AAA domain-containing protein 3A homolog.